The chain runs to 461 residues: Chromosomal replication initiator protein DnaA (461 aa).

Residues 1–83 are domain I, interacts with DnaA modulators; that stretch reads MTASLWQQCL…LHFAVGRRPT (83 aa). The segment at 83–124 is domain II; it reads TAATVQMNTAAAPVADVRIGPAITVPSWTSKQDAMPEINHKS. Residues 125–341 form a domain III, AAA+ region region; that stretch reads NINETYTFEN…GALNRVIANA (217 aa). Residues Gly169, Gly171, Lys172, and Thr173 each coordinate ATP. A domain IV, binds dsDNA region spans residues 342–461; sequence RFTGKPINID…YSNLIRTLSS (120 aa).

Belongs to the DnaA family. In terms of assembly, oligomerizes as a right-handed, spiral filament on DNA at oriC.

Its subcellular location is the cytoplasm. Its function is as follows. Plays an essential role in the initiation and regulation of chromosomal replication. ATP-DnaA binds to the origin of replication (oriC) to initiate formation of the DNA replication initiation complex once per cell cycle. Binds the DnaA box (a 9 base pair repeat at the origin) and separates the double-stranded (ds)DNA. Forms a right-handed helical filament on oriC DNA; dsDNA binds to the exterior of the filament while single-stranded (ss)DNA is stabiized in the filament's interior. The ATP-DnaA-oriC complex binds and stabilizes one strand of the AT-rich DNA unwinding element (DUE), permitting loading of DNA polymerase. After initiation quickly degrades to an ADP-DnaA complex that is not apt for DNA replication. Binds acidic phospholipids. This is Chromosomal replication initiator protein DnaA from Tolumonas auensis (strain DSM 9187 / NBRC 110442 / TA 4).